A 260-amino-acid polypeptide reads, in one-letter code: Vesicle-associated membrane protein 7B (260 aa).

The Cytoplasmic segment spans residues 1-189; the sequence is MPIIYSLVAR…KCAMWWKNVK (189 aa). The Longin domain maps to 7-110; it reads LVARGSSVLA…GMNSDFSRTL (104 aa). Positions 125–186 constitute a v-SNARE coiled-coil homology domain; sequence TMSRTMAEID…KQLKCAMWWK (62 aa). The chain crosses the membrane as a helical; Anchor for type IV membrane protein span at residues 190 to 210; the sequence is LMLVLGAIVLIIIFIIVMSYC. At 211–260 the chain is on the vesicular side; the sequence is DGFRSGSKCRSSPSSNSTPTPTPTETPTPTPTPTSTPTPSQLLETLLNQF. The disordered stretch occupies residues 215–250; sequence SGSKCRSSPSSNSTPTPTPTETPTPTPTPTSTPTPS. The segment covering 230–246 has biased composition (pro residues); that stretch reads TPTPTETPTPTPTPTST.

This sequence belongs to the synaptobrevin family.

Its subcellular location is the cytoplasmic vesicle. The protein localises to the secretory vesicle membrane. It is found in the golgi apparatus. The protein resides in the trans-Golgi network membrane. It localises to the late endosome membrane. Its subcellular location is the lysosome membrane. The protein localises to the endoplasmic reticulum membrane. It is found in the phagosome membrane. Involved in the targeting and/or fusion of transport vesicles to their target membrane during transport of proteins from the early endosome to the lysosome. Required for heterotypic fusion of late endosomes with lysosomes and homotypic lysosomal fusion. In Dictyostelium discoideum (Social amoeba), this protein is Vesicle-associated membrane protein 7B.